A 215-amino-acid polypeptide reads, in one-letter code: Large ribosomal subunit protein uL3 (215 aa).

The interval glycine 136–lysine 161 is disordered. The residue at position 151 (glutamine 151) is an N5-methylglutamine.

It belongs to the universal ribosomal protein uL3 family. Part of the 50S ribosomal subunit. Forms a cluster with proteins L14 and L19. In terms of processing, methylated by PrmB.

Its function is as follows. One of the primary rRNA binding proteins, it binds directly near the 3'-end of the 23S rRNA, where it nucleates assembly of the 50S subunit. This chain is Large ribosomal subunit protein uL3, found in Rickettsia akari (strain Hartford).